We begin with the raw amino-acid sequence, 985 residues long: DNA repair protein REV1 (985 aa).

A BRCT domain is found at 161–249 (QSSKIFKNCV…RLLPWQNYSL (89 aa)). Residues 319–329 (YFAHSRLHHLS) form an interaction with target DNA region. Residues arginine 324 and 362–366 (DFDCF) contribute to the dCTP site. The UmuC domain maps to 358–554 (IFHIDFDCFF…FKLDDLPGVG (197 aa)). 2 residues coordinate Mg(2+): aspartate 362 and phenylalanine 363. An interaction with target DNA region spans residues 395–397 (TKN). Residues 402–408 (SCNYVAR), asparagine 414, and aspartate 467 each bind dCTP. Mg(2+) is bound by residues aspartate 467 and glutamate 468. Interaction with target DNA regions lie at residues 554-557 (GHST) and 620-628 (RKSLSIDIN).

The protein belongs to the DNA polymerase type-Y family. As to quaternary structure, interacts with REV7. Mg(2+) serves as cofactor.

The protein resides in the nucleus. The protein localises to the mitochondrion. In terms of biological role, deoxycytidyl transferase involved in DNA repair. Transfers a dCMP residue from dCTP to the 3'-end of a DNA primer in a template-dependent reaction. May assist in the first step in the bypass of abasic lesions by the insertion of a nucleotide opposite the lesion. Required for normal induction of mutations by physical and chemical agents. Involved in mitochondrial DNA mutagenesis. In Saccharomyces cerevisiae (strain ATCC 204508 / S288c) (Baker's yeast), this protein is DNA repair protein REV1 (REV1).